The following is a 697-amino-acid chain: Polyribonucleotide nucleotidyltransferase (697 aa).

Asp-487 and Asp-493 together coordinate Mg(2+). Residues 554 to 613 (PRIETIQIKPSKIAVVIGPGGKQIRAIIEQTGVQIDIDDTGLVNIAAIDLVSIEKAKAII) form the KH domain. An S1 motif domain is found at 623–691 (GRIYSGKAIS…ERGQIKLSRK (69 aa)).

It belongs to the polyribonucleotide nucleotidyltransferase family. The cofactor is Mg(2+).

It is found in the cytoplasm. The enzyme catalyses RNA(n+1) + phosphate = RNA(n) + a ribonucleoside 5'-diphosphate. In terms of biological role, involved in mRNA degradation. Catalyzes the phosphorolysis of single-stranded polyribonucleotides processively in the 3'- to 5'-direction. The polypeptide is Polyribonucleotide nucleotidyltransferase (Protochlamydia amoebophila (strain UWE25)).